The sequence spans 1107 residues: RNA-dependent RNA polymerase 1 (1107 aa).

This sequence belongs to the RdRP family.

It catalyses the reaction RNA(n) + a ribonucleoside 5'-triphosphate = RNA(n+1) + diphosphate. Functionally, RNA-dependent direct polymerase involved in antiviral silencing. Required for the production of some small RNAs (mainly 21 and some 22 nucleotides) derived from the crucifer-infecting tobamovirus (TMV-cg). Required for turnip mosaic virus (TuMV) silencing and accumulation of viral siRNAs. Involved in cucumber mosaic virus (CMV) silencing. Required for the biogenesis of viral secondary siRNAs, process that follows the production of primary siRNAs derived from viral RNA replication. Specifically targets the positive-strand of the 3 RNA genomes of CMV and preferentially amplifies the 5'-terminal siRNAs of each viral genomic RNA. Not involved in the production of siRNAs derived from a single-stranded 336-nucleotide satellite RNA of CMV. The sequence is that of RNA-dependent RNA polymerase 1 (RDR1) from Arabidopsis thaliana (Mouse-ear cress).